We begin with the raw amino-acid sequence, 118 residues long: Protein YoeF (118 aa).

This Escherichia coli (strain K12) protein is Protein YoeF (yoeF).